A 64-amino-acid polypeptide reads, in one-letter code: Large ribosomal subunit protein bL28C (64 aa).

The protein belongs to the bacterial ribosomal protein bL28 family.

This is Large ribosomal subunit protein bL28C from Mycobacterium tuberculosis (strain ATCC 25618 / H37Rv).